We begin with the raw amino-acid sequence, 256 residues long: Trypsin alpha (256 aa).

The signal sequence occupies residues 1–22; the sequence is MLKIVILLSAVVCALGGTVPEG. Positions 23–30 are cleaved as a propeptide — activation peptide; it reads LLPQLDGR. One can recognise a Peptidase S1 domain in the interval 31 to 254; the sequence is IVGGSATTIS…LRSWVVSTAN (224 aa). Cysteines 56 and 72 form a disulfide. Residues His71 and Asp116 each act as charge relay system in the active site. Intrachain disulfides connect Cys180-Cys197 and Cys206-Cys230. The active-site Charge relay system is Ser210.

This sequence belongs to the peptidase S1 family. In terms of tissue distribution, synthesized in the midgut of both larvae and adults, primarily in the ventriculus and gastric caeca.

The protein resides in the secreted. It is found in the extracellular space. The enzyme catalyses Preferential cleavage: Arg-|-Xaa, Lys-|-Xaa.. This Drosophila melanogaster (Fruit fly) protein is Trypsin alpha (alphaTry).